The following is a 178-amino-acid chain: ATP synthase subunit delta (178 aa).

Belongs to the ATPase delta chain family. As to quaternary structure, F-type ATPases have 2 components, F(1) - the catalytic core - and F(0) - the membrane proton channel. F(1) has five subunits: alpha(3), beta(3), gamma(1), delta(1), epsilon(1). F(0) has three main subunits: a(1), b(2) and c(10-14). The alpha and beta chains form an alternating ring which encloses part of the gamma chain. F(1) is attached to F(0) by a central stalk formed by the gamma and epsilon chains, while a peripheral stalk is formed by the delta and b chains.

The protein localises to the cell inner membrane. In terms of biological role, f(1)F(0) ATP synthase produces ATP from ADP in the presence of a proton or sodium gradient. F-type ATPases consist of two structural domains, F(1) containing the extramembraneous catalytic core and F(0) containing the membrane proton channel, linked together by a central stalk and a peripheral stalk. During catalysis, ATP synthesis in the catalytic domain of F(1) is coupled via a rotary mechanism of the central stalk subunits to proton translocation. Functionally, this protein is part of the stalk that links CF(0) to CF(1). It either transmits conformational changes from CF(0) to CF(1) or is implicated in proton conduction. The chain is ATP synthase subunit delta from Polynucleobacter necessarius subsp. necessarius (strain STIR1).